The primary structure comprises 218 residues: Protein GrpE (218 aa).

Residues 1-78 (MSEFNKDDYL…DSADTLTPLG (78 aa)) form a disordered region. The span at 14-58 (PDPSDAEAAAQASSGADASAESGSAQDSAAQAPSNEGADAAPAAA) shows a compositional bias: low complexity.

It belongs to the GrpE family. In terms of assembly, homodimer.

The protein resides in the cytoplasm. Its function is as follows. Participates actively in the response to hyperosmotic and heat shock by preventing the aggregation of stress-denatured proteins, in association with DnaK and GrpE. It is the nucleotide exchange factor for DnaK and may function as a thermosensor. Unfolded proteins bind initially to DnaJ; upon interaction with the DnaJ-bound protein, DnaK hydrolyzes its bound ATP, resulting in the formation of a stable complex. GrpE releases ADP from DnaK; ATP binding to DnaK triggers the release of the substrate protein, thus completing the reaction cycle. Several rounds of ATP-dependent interactions between DnaJ, DnaK and GrpE are required for fully efficient folding. In Bifidobacterium longum (strain NCC 2705), this protein is Protein GrpE.